A 380-amino-acid polypeptide reads, in one-letter code: S-adenosylmethionine:tRNA ribosyltransferase-isomerase (380 aa).

A compositionally biased stretch (basic and acidic residues) spans 1-15; sequence MHSKHPTDTARRCET. Residues 1–24 form a disordered region; it reads MHSKHPTDTARRCETGTDSSDTAA.

This sequence belongs to the QueA family. In terms of assembly, monomer.

The protein localises to the cytoplasm. The catalysed reaction is 7-aminomethyl-7-carbaguanosine(34) in tRNA + S-adenosyl-L-methionine = epoxyqueuosine(34) in tRNA + adenine + L-methionine + 2 H(+). It participates in tRNA modification; tRNA-queuosine biosynthesis. Functionally, transfers and isomerizes the ribose moiety from AdoMet to the 7-aminomethyl group of 7-deazaguanine (preQ1-tRNA) to give epoxyqueuosine (oQ-tRNA). The sequence is that of S-adenosylmethionine:tRNA ribosyltransferase-isomerase from Oleidesulfovibrio alaskensis (strain ATCC BAA-1058 / DSM 17464 / G20) (Desulfovibrio alaskensis).